A 284-amino-acid chain; its full sequence is Polyamine aminopropyltransferase (284 aa).

The region spanning 6–242 is the PABS domain; it reads KGWFTEVCKE…GWWSATLAGH (237 aa). An S-methyl-5'-thioadenosine-binding site is contributed by glutamine 36. Spermidine-binding residues include histidine 67 and aspartate 91. S-methyl-5'-thioadenosine contacts are provided by residues glutamate 111 and 142–143; that span reads DG. The Proton acceptor role is filled by aspartate 161. Position 161–164 (161–164) interacts with spermidine; it reads DSTD.

Belongs to the spermidine/spermine synthase family. Homodimer or homotetramer.

Its subcellular location is the cytoplasm. The catalysed reaction is S-adenosyl 3-(methylsulfanyl)propylamine + putrescine = S-methyl-5'-thioadenosine + spermidine + H(+). It participates in amine and polyamine biosynthesis; spermidine biosynthesis; spermidine from putrescine: step 1/1. In terms of biological role, catalyzes the irreversible transfer of a propylamine group from the amino donor S-adenosylmethioninamine (decarboxy-AdoMet) to putrescine (1,4-diaminobutane) to yield spermidine. The chain is Polyamine aminopropyltransferase from Nitrosococcus oceani (strain ATCC 19707 / BCRC 17464 / JCM 30415 / NCIMB 11848 / C-107).